Consider the following 357-residue polypeptide: S-adenosylmethionine:tRNA ribosyltransferase-isomerase (357 aa).

It belongs to the QueA family. Monomer.

It localises to the cytoplasm. The enzyme catalyses 7-aminomethyl-7-carbaguanosine(34) in tRNA + S-adenosyl-L-methionine = epoxyqueuosine(34) in tRNA + adenine + L-methionine + 2 H(+). The protein operates within tRNA modification; tRNA-queuosine biosynthesis. Functionally, transfers and isomerizes the ribose moiety from AdoMet to the 7-aminomethyl group of 7-deazaguanine (preQ1-tRNA) to give epoxyqueuosine (oQ-tRNA). In Hamiltonella defensa subsp. Acyrthosiphon pisum (strain 5AT), this protein is S-adenosylmethionine:tRNA ribosyltransferase-isomerase.